Here is a 381-residue protein sequence, read N- to C-terminus: Beta-1,4-galactosyltransferase 5 (381 aa).

At 1–11 (MPTHLRFRRRS) the chain is on the cytoplasmic side. A helical; Signal-anchor for type II membrane protein membrane pass occupies residues 12 to 32 (FLGLLFLFSLSTSALYFIYSA). Over 33 to 381 (PGIVNEYLFM…SRDLAPVADY (349 aa)) the chain is Lumenal. Asn73, Asn82, and Asn120 each carry an N-linked (GlcNAc...) asparagine glycan. The cysteines at positions 106 and 151 are disulfide-linked. UDP-alpha-D-galactose is bound by residues 162 to 166 (PFRNR), 201 to 203 (FNR), 228 to 229 (VD), Tyr257, and Trp289. A disulfide bond links Cys222 and Cys241. Residue Asp229 coordinates Mn(2+). N-acetyl-D-glucosamine is bound at residue 291 to 294 (GEDD). A Mn(2+)-binding site is contributed by His322. 322–323 (HH) serves as a coordination point for UDP-alpha-D-galactose. N-acetyl-D-glucosamine is bound at residue Arg333. Residue Asn366 is glycosylated (N-linked (GlcNAc...) asparagine).

This sequence belongs to the glycosyltransferase 7 family. Mn(2+) serves as cofactor.

The protein resides in the golgi apparatus. The protein localises to the golgi stack membrane. The enzyme catalyses a beta-D-glucosyl-(1&lt;-&gt;1')-N-acylsphing-4-enine + UDP-alpha-D-galactose = a beta-D-Gal-(1-&gt;4)-beta-D-Glc-(1&lt;-&gt;1)-Cer(d18:1(4E)) + UDP + H(+). It participates in protein modification; protein glycosylation. The protein operates within sphingolipid metabolism. Functionally, catalyzes the synthesis of lactosylceramide (LacCer) via the transfer of galactose from UDP-galactose to glucosylceramide (GlcCer). Required for proper patterning of the dorsoventral axis during embryogenesis through the regulation of BMP signaling. Plays a role in proteoglycan glycosylation that is required for BMP-dependent specification of the dorsoventral axis. This Danio rerio (Zebrafish) protein is Beta-1,4-galactosyltransferase 5 (b4galt5).